A 408-amino-acid chain; its full sequence is Imidazolonepropionase (408 aa).

Fe(3+) contacts are provided by histidine 73 and histidine 75. Histidine 73 and histidine 75 together coordinate Zn(2+). 3 residues coordinate 4-imidazolone-5-propanoate: arginine 82, tyrosine 145, and histidine 178. Tyrosine 145 is a binding site for N-formimidoyl-L-glutamate. Histidine 243 provides a ligand contact to Fe(3+). Residue histidine 243 coordinates Zn(2+). 4-imidazolone-5-propanoate is bound at residue glutamine 246. Aspartate 318 contributes to the Fe(3+) binding site. Residue aspartate 318 participates in Zn(2+) binding. Residues asparagine 320 and glycine 322 each coordinate N-formimidoyl-L-glutamate. Residue serine 323 coordinates 4-imidazolone-5-propanoate.

Belongs to the metallo-dependent hydrolases superfamily. HutI family. It depends on Zn(2+) as a cofactor. Fe(3+) is required as a cofactor.

The protein resides in the cytoplasm. The enzyme catalyses 4-imidazolone-5-propanoate + H2O = N-formimidoyl-L-glutamate. It functions in the pathway amino-acid degradation; L-histidine degradation into L-glutamate; N-formimidoyl-L-glutamate from L-histidine: step 3/3. Functionally, catalyzes the hydrolytic cleavage of the carbon-nitrogen bond in imidazolone-5-propanoate to yield N-formimidoyl-L-glutamate. It is the third step in the universal histidine degradation pathway. The polypeptide is Imidazolonepropionase (Shewanella halifaxensis (strain HAW-EB4)).